The sequence spans 450 residues: TATA box-binding protein-associated factor RNA polymerase I subunit A (450 aa).

As to quaternary structure, component of the transcription factor SL1/TIF-IB complex, composed of TBP and at least TAF1A, TAF1B, TAF1C and TAF1D. In the complex interacts directly with TBP, TAF1A and TAF1B. Interaction of the SL1/TIF-IB subunits with TBP excludes interaction of TBP with the transcription factor IID (TFIID) subunits. Interacts with UBFT. Interacts with CEBPA (isoform 1 and isoform 4). Part of Pol I pre-initiation complex (PIC), in which Pol I core assembles with RRN3 and promoter-bound UTBF and SL1/TIF-IB complex.

The protein resides in the nucleus. The protein localises to the nucleolus. Component of the transcription factor SL1/TIF-IB complex, which is involved in the assembly of the PIC (pre-initiation complex) during RNA polymerase I-dependent transcription. The rate of PIC formation probably is primarily dependent on the rate of association of SL1/TIF-IB with the rDNA promoter. SL1/TIF-IB is involved in stabilization of nucleolar transcription factor 1/UBTF on rDNA. Formation of SL1/TIF-IB excludes the association of TBP with TFIID subunits. This chain is TATA box-binding protein-associated factor RNA polymerase I subunit A (TAF1A), found in Homo sapiens (Human).